The sequence spans 548 residues: Glucose-6-phosphate isomerase (548 aa).

E355 serves as the catalytic Proton donor. Catalysis depends on residues H386 and K514.

This sequence belongs to the GPI family.

It is found in the cytoplasm. The catalysed reaction is alpha-D-glucose 6-phosphate = beta-D-fructose 6-phosphate. The protein operates within carbohydrate biosynthesis; gluconeogenesis. Its pathway is carbohydrate degradation; glycolysis; D-glyceraldehyde 3-phosphate and glycerone phosphate from D-glucose: step 2/4. In terms of biological role, catalyzes the reversible isomerization of glucose-6-phosphate to fructose-6-phosphate. The polypeptide is Glucose-6-phosphate isomerase (Yersinia pestis (strain Pestoides F)).